Here is a 388-residue protein sequence, read N- to C-terminus: Deoxyuridine 5'-triphosphate nucleotidohydrolase (388 aa).

The span at Glu-77–Glu-88 shows a compositional bias: basic and acidic residues. Disordered stretches follow at residues Glu-77 to Pro-96 and Thr-336 to Pro-388. The span at Val-351–Lys-363 shows a compositional bias: acidic residues.

The protein belongs to the dUTPase family. Requires Mg(2+) as cofactor.

It carries out the reaction dUTP + H2O = dUMP + diphosphate + H(+). The protein operates within pyrimidine metabolism; dUMP biosynthesis; dUMP from dCTP (dUTP route): step 2/2. In terms of biological role, involved in nucleotide metabolism: produces dUMP, the immediate precursor of thymidine nucleotides and decreases the intracellular concentration of dUTP to avoid uracil incorporation into viral DNA. This Homo sapiens (Human) protein is Deoxyuridine 5'-triphosphate nucleotidohydrolase.